The primary structure comprises 474 residues: GTPase Der (474 aa).

EngA-type G domains are found at residues 2–166 (LRIA…NVPE) and 212–385 (LKIA…ETVS). GTP contacts are provided by residues 8–15 (GRPNVGKS), 55–59 (DTGGV), 118–121 (NKAD), 218–225 (GRPNVGKS), 265–269 (DTAGL), and 330–333 (NKWD). In terms of domain architecture, KH-like spans 386 to 470 (SKVPTPVVNK…PFDLEFKEKT (85 aa)).

This sequence belongs to the TRAFAC class TrmE-Era-EngA-EngB-Septin-like GTPase superfamily. EngA (Der) GTPase family. Associates with the 50S ribosomal subunit.

In terms of biological role, GTPase that plays an essential role in the late steps of ribosome biogenesis. This Chlamydia caviae (strain ATCC VR-813 / DSM 19441 / 03DC25 / GPIC) (Chlamydophila caviae) protein is GTPase Der.